The chain runs to 480 residues: Methylenetetrahydrofolate--tRNA-(uracil-5-)-methyltransferase TrmFO (480 aa).

Glycine 15–glycine 20 is an FAD binding site.

This sequence belongs to the MnmG family. TrmFO subfamily. FAD serves as cofactor.

The protein localises to the cytoplasm. The catalysed reaction is uridine(54) in tRNA + (6R)-5,10-methylene-5,6,7,8-tetrahydrofolate + NADH + H(+) = 5-methyluridine(54) in tRNA + (6S)-5,6,7,8-tetrahydrofolate + NAD(+). It carries out the reaction uridine(54) in tRNA + (6R)-5,10-methylene-5,6,7,8-tetrahydrofolate + NADPH + H(+) = 5-methyluridine(54) in tRNA + (6S)-5,6,7,8-tetrahydrofolate + NADP(+). Functionally, catalyzes the folate-dependent formation of 5-methyl-uridine at position 54 (M-5-U54) in all tRNAs. This chain is Methylenetetrahydrofolate--tRNA-(uracil-5-)-methyltransferase TrmFO, found in Caulobacter sp. (strain K31).